Here is a 176-residue protein sequence, read N- to C-terminus: Small ribosomal subunit protein bS6 (176 aa).

The disordered stretch occupies residues 97 to 176 (DQYTPNDSPP…VEPVDTTSEE (80 aa)). Residues 140–160 (AVETVEPPAEPAEPVEAVETV) are compositionally biased toward low complexity. A compositionally biased stretch (acidic residues) spans 161–176 (DTTEETVEPVDTTSEE).

The protein belongs to the bacterial ribosomal protein bS6 family.

In terms of biological role, binds together with bS18 to 16S ribosomal RNA. This Gloeothece citriformis (strain PCC 7424) (Cyanothece sp. (strain PCC 7424)) protein is Small ribosomal subunit protein bS6.